The following is a 686-amino-acid chain: Probable metal-nicotianamine transporter YSL10 (686 aa).

Transmembrane regions (helical) follow at residues 36–56 (VTLR…VIVM), 60–80 (LTTG…FFLL), 109–129 (CVVA…IFAM), 151–171 (LGWM…SVVP), 212–232 (MLGK…FYTG), 271–291 (LVNI…WPLI), 316–336 (VFIS…KVMT), 383–403 (IPNW…IATV), 415–435 (VAVS…GCGL), 461–481 (GGII…STAS), 501–521 (FVSQ…VFWL), 556–576 (GSLP…AIAV), 597–617 (MAIP…GSLI), and 639–659 (GLIC…LAGV).

The protein belongs to the YSL (TC 2.A.67.2) family.

It localises to the membrane. Functionally, may be involved in the transport of nicotianamine-chelated metals. The protein is Probable metal-nicotianamine transporter YSL10 (YSL10) of Oryza sativa subsp. japonica (Rice).